The sequence spans 325 residues: 4-hydroxy-3-methylbut-2-enyl diphosphate reductase (325 aa).

Residue Cys13 participates in [4Fe-4S] cluster binding. The (2E)-4-hydroxy-3-methylbut-2-enyl diphosphate site is built by His42 and His76. Dimethylallyl diphosphate contacts are provided by His42 and His76. Positions 42 and 76 each coordinate isopentenyl diphosphate. Cys98 contributes to the [4Fe-4S] cluster binding site. His126 lines the (2E)-4-hydroxy-3-methylbut-2-enyl diphosphate pocket. His126 serves as a coordination point for dimethylallyl diphosphate. Isopentenyl diphosphate is bound at residue His126. Glu128 acts as the Proton donor in catalysis. A (2E)-4-hydroxy-3-methylbut-2-enyl diphosphate-binding site is contributed by Thr169. Position 230 (Cys230) interacts with [4Fe-4S] cluster. The (2E)-4-hydroxy-3-methylbut-2-enyl diphosphate site is built by Ser258, Ser259, Asn260, and Ser306. Residues Ser258, Ser259, Asn260, and Ser306 each coordinate dimethylallyl diphosphate. Residues Ser258, Ser259, Asn260, and Ser306 each contribute to the isopentenyl diphosphate site.

This sequence belongs to the IspH family. [4Fe-4S] cluster serves as cofactor.

The enzyme catalyses isopentenyl diphosphate + 2 oxidized [2Fe-2S]-[ferredoxin] + H2O = (2E)-4-hydroxy-3-methylbut-2-enyl diphosphate + 2 reduced [2Fe-2S]-[ferredoxin] + 2 H(+). It catalyses the reaction dimethylallyl diphosphate + 2 oxidized [2Fe-2S]-[ferredoxin] + H2O = (2E)-4-hydroxy-3-methylbut-2-enyl diphosphate + 2 reduced [2Fe-2S]-[ferredoxin] + 2 H(+). It functions in the pathway isoprenoid biosynthesis; dimethylallyl diphosphate biosynthesis; dimethylallyl diphosphate from (2E)-4-hydroxy-3-methylbutenyl diphosphate: step 1/1. The protein operates within isoprenoid biosynthesis; isopentenyl diphosphate biosynthesis via DXP pathway; isopentenyl diphosphate from 1-deoxy-D-xylulose 5-phosphate: step 6/6. Catalyzes the conversion of 1-hydroxy-2-methyl-2-(E)-butenyl 4-diphosphate (HMBPP) into a mixture of isopentenyl diphosphate (IPP) and dimethylallyl diphosphate (DMAPP). Acts in the terminal step of the DOXP/MEP pathway for isoprenoid precursor biosynthesis. The polypeptide is 4-hydroxy-3-methylbut-2-enyl diphosphate reductase (Prosthecochloris aestuarii (strain DSM 271 / SK 413)).